Reading from the N-terminus, the 996-residue chain is Alanine--tRNA ligase, chloroplastic/mitochondrial (996 aa).

The Zn(2+) site is built by histidine 677, histidine 681, cysteine 779, and histidine 783.

The protein belongs to the class-II aminoacyl-tRNA synthetase family. In terms of assembly, monomer. It depends on Zn(2+) as a cofactor.

The protein resides in the plastid. Its subcellular location is the chloroplast. It is found in the mitochondrion. The enzyme catalyses tRNA(Ala) + L-alanine + ATP = L-alanyl-tRNA(Ala) + AMP + diphosphate. Its function is as follows. Catalyzes the attachment of alanine to tRNA(Ala) in a two-step reaction: alanine is first activated by ATP to form Ala-AMP and then transferred to the acceptor end of tRNA(Ala). Also edits incorrectly charged tRNA(Ala) via its editing domain. The chain is Alanine--tRNA ligase, chloroplastic/mitochondrial from Oryza sativa subsp. indica (Rice).